A 42-amino-acid chain; its full sequence is Iota-conotoxin-like R11.1 (42 aa).

4 disulfide bridges follow: cysteine 5-cysteine 19, cysteine 12-cysteine 22, cysteine 18-cysteine 27, and cysteine 21-cysteine 36.

This sequence belongs to the conotoxin I1 superfamily. As to expression, expressed by the venom duct.

Its subcellular location is the secreted. Its function is as follows. Iota-conotoxins bind to voltage-gated sodium channels (Nav) and act as agonists by shifting the voltage-dependence of activation to more hyperpolarized levels. Produces general excitatory symptoms. The chain is Iota-conotoxin-like R11.1 from Conus radiatus (Rayed cone).